Consider the following 341-residue polypeptide: D-aspartate oxidase (341 aa).

The FAD site is built by D36, R37, T43, S44, M50, G307, I311, and S312. The short motif at 339 to 341 (SKL) is the Microbody targeting signal element.

This sequence belongs to the DAMOX/DASOX family. In terms of assembly, tetramer. Interacts with PEX5; the interaction is direct and required for localization of DDO to the peroxisome. FAD serves as cofactor. In terms of tissue distribution, expressed in liver and kidney (at protein level). In the brain, expressed in the frontal, temporal, and occipital lobes of the cortex, hippocampus, striatum, diencephalon, brainstem, cerebellum, spinal cord, plexus choroiderus and ependyma (at protein level). Also expressed in the lung, muscle, heart, spleen, small intestine and testis (at protein level).

Its subcellular location is the peroxisome matrix. It localises to the cytoplasm. It is found in the cytosol. It catalyses the reaction D-aspartate + O2 + H2O = oxaloacetate + H2O2 + NH4(+). The catalysed reaction is D-glutamate + O2 + H2O = H2O2 + 2-oxoglutarate + NH4(+). Inhibited by aminooxyacetic acid, malonate, meso-tartrate and potassium bromide. Selectively catalyzes the oxidative deamination of acidic amino acids. Suppresses the level of D-aspartate in the brain, an amino acid that can act as an agonist for glutamate receptors. Protects the organism from the toxicity of D-amino acids. May also function in the intestine. In Rattus norvegicus (Rat), this protein is D-aspartate oxidase.